Consider the following 871-residue polypeptide: Zinc finger and BTB domain-containing protein 10 (871 aa).

Disordered regions lie at residues 1–156 (MSFS…FNGR) and 177–228 (GASL…AGEG). A compositionally biased stretch (gly residues) spans 14 to 26 (RGGGLVTASGGGS). The segment covering 27–37 (TNNNAGGEASA) has biased composition (low complexity). Residues 39 to 56 (PPQPQPRQPPPPAPPALQ) show a composition bias toward pro residues. Over residues 65–76 (EEVELEGLEPQD) the composition is skewed to acidic residues. A compositionally biased stretch (low complexity) spans 77 to 103 (LEASAGPAAGAAEEAKELLLPQDAGGP). Omega-N-methylarginine is present on arginine 126. Residues 126-135 (RGGGGGGLGN) are compositionally biased toward gly residues. Position 210 is a phosphoserine (serine 210). Lysine 245 participates in a covalent cross-link: Glycyl lysine isopeptide (Lys-Gly) (interchain with G-Cter in SUMO2). The BTB domain maps to 364–433 (CDVSIVVSGK…LYSGNLVLTS (70 aa)). Glycyl lysine isopeptide (Lys-Gly) (interchain with G-Cter in SUMO2) cross-links involve residues lysine 468, lysine 483, and lysine 497. The residue at position 565 (serine 565) is a Phosphoserine. Residues lysine 573, lysine 672, lysine 684, lysine 696, and lysine 706 each participate in a glycyl lysine isopeptide (Lys-Gly) (interchain with G-Cter in SUMO2) cross-link. C2H2-type zinc fingers lie at residues 722–744 (LKCP…LLIH) and 750–772 (FSCD…SLVH). Residues 812–871 (SQPGGQEGVDQGQDTEFPRDEEYEENEVGEADEELVDDGEDQNDPSRWDESGEVCMSLDD) are disordered. The segment covering 830–854 (RDEEYEENEVGEADEELVDDGEDQN) has biased composition (acidic residues).

The protein resides in the nucleus. May be involved in transcriptional regulation. The sequence is that of Zinc finger and BTB domain-containing protein 10 (ZBTB10) from Homo sapiens (Human).